Here is a 428-residue protein sequence, read N- to C-terminus: MRGLDRWIAEAIRSESLDHNGQIICGGLFLEESLPSSSVSFLSSKDCSVNSCRFSQKSSFLKFRRRNGTREPLFLSVSLSINESNGEEEEGEGYNGQNGFKSEKGSVLIGGGQESKEKRRVKENGAGALNTTKHLWAGAFAAMVSRTCIAPLERMKLEYIVRGEQGNLLELIQRIATNEGIRGFWKGNLVNILRTAPFKSINFYAYDTYRGQLLKLSGNEETTNFERFVAGAAAGVTASLLCLPLDTIRTVMVAPGGEALGGVVGAFRHMIQTEGFFSLYKGLVPSLVSMAPSGAVFYGVYDILKSAYLHTPEGKKRLEHMKQEGEELNAFDQLELGPMRTLLYGAIAGACSEAATYPFEVVRRRLQMQSHAKRLSAVATCVKIIEQGGVPALYAGLIPSLLQVLPSAAISYFVYEFMKVVLKVESSA.

Solcar repeat units lie at residues L129–Q212, T222–A307, and L336–V421. 6 consecutive transmembrane segments (helical) span residues T132 to L152, G187 to D207, F228 to I248, L283 to I303, L342 to V362, and V390 to I410.

Belongs to the mitochondrial carrier (TC 2.A.29) family.

Its subcellular location is the mitochondrion inner membrane. In terms of biological role, probable mitochondrial adenylate carrier that catalyzes the transport of ATP, ADP and AMP. The protein is Probable mitochondrial adenine nucleotide transporter BTL3 of Arabidopsis thaliana (Mouse-ear cress).